The sequence spans 1076 residues: Nuclear factor of activated T-cells, cytoplasmic 3 (1076 aa).

T2 carries the N-acetylthreonine modification. The tract at residues 110 to 115 (PSIQIT) is calcineurin-binding. The segment at 206 to 307 (LGSPLTSPGG…PGHSPRGSVT (102 aa)) is disordered. 2 consecutive repeat copies span residues 208–224 (SPLT…PGEE) and 237–253 (SPRQ…ITDE). The tract at residues 208–309 (SPLTSPGGSP…HSPRGSVTED (102 aa)) is 3 X SP repeats. Polar residues predominate over residues 237–254 (SPRQSPCHSPRSSITDEN). Low complexity predominate over residues 257 to 271 (SPRPASGPSSRPTSP). Residues 274 to 276 (KRR) carry the Nuclear localization signal motif. Copy 3 of the repeat occupies 293–309 (SPVPSPGHSPRGSVTED). At S345 the chain carries Phosphoserine. The tract at residues 359-390 (CSDDQGSLSPSRETSVDDGLGSQYPLKKDSSG) is disordered. Residues 362-371 (DQGSLSPSRE) show a composition bias toward polar residues. At S373 the chain carries Phosphoserine. One can recognise an RHD domain in the interval 416 to 597 (SSLPPLDWPL…IPVECSQRSA (182 aa)). Residues 445 to 452 (RAHYETEG) mediate DNA binding. The short motif at 687 to 689 (KRK) is the Nuclear localization signal element. Disordered regions lie at residues 700–744 (PVLM…ALSA) and 863–987 (GHLL…GGLS). The segment covering 713–722 (LSSVPSLPVP) has biased composition (low complexity). Polar residues-rich tracts occupy residues 724-734 (SAQTQRPSSDT) and 888-911 (SAGQ…SHLQ). Composition is skewed to low complexity over residues 917-939 (PSHP…SSPI) and 946-965 (QLQS…SPSP). Over residues 970-981 (HSGQHSTQAQST) the composition is skewed to polar residues. The short motif at 1032–1041 (TLDDVNEIIG) is the Nuclear export signal element. Positions 1049–1076 (VSQGPEVIRDAPLPGPESPDVMSSNSAQ) are disordered. At S1066 the chain carries Phosphoserine.

NFATC proteins bind to DNA as monomers. Member of the multicomponent NFATC transcription complex that consists of at least two components, a pre-existing cytoplasmic component NFATC2 and an inducible nuclear component NFATC1. Other members such as NFATC4, or members of the activating protein-1 family, MAF, GATA4 and Cbp/p300 can also bind the complex. Component of a promoter-binding complex composed of STAT3, NFATC3 and NFATC4; complex formation is enhanced by calcineurin. Interacts with TRIM17; this interaction prevents NFATC3 nuclear localization. Interacts with and ubiquitinated by STUB1/CHIP; HSPA1A/HSP70 is required as a co-chaperone. In terms of processing, phosphorylated by NFATC-kinase; dephosphorylated by calcineurin. Ubiquitinated by STUB1/CHIP, leading to proteasomal degradation. In terms of tissue distribution, expressed in cardiomyocytes (at protein level).

It localises to the cytoplasm. The protein localises to the nucleus. Functionally, acts as a regulator of transcriptional activation. Binds to the TNFSF11/RANKL promoter region and promotes TNFSF11 transcription. Binding to the TNFSF11 promoter region is increased by high levels of Ca(2+) which induce NFATC3 expression and may lead to regulation of TNFSF11 expression in osteoblasts. Plays a role in promoting mesenteric arterial wall remodeling in response to the intermittent hypoxia-induced increase in EDN1 and ROCK signaling. As a result NFATC3 colocalizes with F-actin filaments, translocates to the nucleus and promotes transcription of the smooth muscle hypertrophy and differentiation marker ACTA2. Promotes lipopolysaccharide-induced apoptosis and hypertrophy in cardiomyocytes. Following JAK/STAT signaling activation and as part of a complex with NFATC4 and STAT3, binds to the alpha-beta E4 promoter region of CRYAB and activates transcription in cardiomyocytes. In conjunction with NFATC4, involved in embryonic heart development via maintenance of cardiomyocyte survival, proliferation and differentiation. Plays a role in the inducible expression of cytokine genes in T-cells, especially in the induction of the IL-2. Required for thymocyte maturation during DN3 to DN4 transition and during positive selection. Positively regulates macrophage-derived polymicrobial clearance, via binding to the promoter region and promoting transcription of NOS2 resulting in subsequent generation of nitric oxide. Involved in Ca(2+)-mediated transcriptional responses upon Ca(2+) influx via ORAI1 CRAC channels. The polypeptide is Nuclear factor of activated T-cells, cytoplasmic 3 (Rattus norvegicus (Rat)).